The sequence spans 467 residues: UDP-N-acetylmuramate--L-alanine ligase (467 aa).

Residue 114–120 (GTHGKTT) participates in ATP binding.

This sequence belongs to the MurCDEF family.

It is found in the cytoplasm. It catalyses the reaction UDP-N-acetyl-alpha-D-muramate + L-alanine + ATP = UDP-N-acetyl-alpha-D-muramoyl-L-alanine + ADP + phosphate + H(+). It functions in the pathway cell wall biogenesis; peptidoglycan biosynthesis. Its function is as follows. Cell wall formation. This is UDP-N-acetylmuramate--L-alanine ligase from Rhodopseudomonas palustris (strain BisB5).